A 354-amino-acid polypeptide reads, in one-letter code: Glutaminyl-peptide cyclotransferase (354 aa).

A mitochondrion-targeting transit peptide spans 1 to 8 (MRLLLRNY). An intrachain disulfide couples Cys136 to Cys158. A Zn(2+)-binding site is contributed by Asp153. Glu190 serves as the catalytic Proton acceptor. Residue Glu191 participates in Zn(2+) binding. The Proton acceptor role is filled by Asp228. His318 contributes to the Zn(2+) binding site.

Belongs to the glutaminyl-peptide cyclotransferase family.

It localises to the secreted. The protein localises to the mitochondrion. It carries out the reaction N-terminal L-glutaminyl-[peptide] = N-terminal 5-oxo-L-prolyl-[peptide] + NH4(+). With respect to regulation, inhibited by imidazoles (imidazole, benzimidazole, 1-benzylimidazole, 1-methylimidazole, P150/03 and N-omega-acetylhistamine) and cysteamines (cysteamine and N-dimethylcysteamine). Inhibited by PDB50 1(3,4-dimethoxyphenyl)-3-(3-imidazol-1-ylpropyl)thiourea. In terms of biological role, acts as a glutaminyl-peptide cyclotransferase. Responsible for the biosynthesis of pyroglutamyl peptides. Might be more efficient in the conversion of tri and tetrapeptides in vitro. Might have a relative preference for substrates containing hydrophobic amino acids in vitro. The sequence is that of Glutaminyl-peptide cyclotransferase from Drosophila melanogaster (Fruit fly).